Here is a 919-residue protein sequence, read N- to C-terminus: Eukaryotic translation initiation factor 3 subunit C (919 aa).

The segment at 1–28 (MSRFFANGSDSESESSEEEVQAPNFNKA) is disordered. Over residues 11–20 (SESESSEEEV) the composition is skewed to acidic residues. Phosphoserine occurs at positions 34, 165, and 177. A disordered region spans residues 154-275 (LSRFRENPQE…EQKIKLRKRA (122 aa)). Residues 162–171 (QEESENEDEE) are compositionally biased toward acidic residues. Positions 210–236 (ADDEDSDESIDWDPDTESETESSEDEN) are enriched in acidic residues. Basic and acidic residues predominate over residues 241–269 (MRERFLKRSTEKDDKDDDKRKDKRKEQKI). The 177-residue stretch at 640-816 (FHMHINLELL…ETVVMHRSEP (177 aa)) folds into the PCI domain. Positions 848–919 (FFQRGNMGNR…QQQVQTIDEE (72 aa)) are disordered. Over residues 883 to 894 (QRNRNQRGHHKN) the composition is skewed to basic residues. The segment covering 895 to 919 (QQNQNQQQQQQHQREQQQVQTIDEE) has biased composition (low complexity).

The protein belongs to the eIF-3 subunit C family. As to quaternary structure, component of the eukaryotic translation initiation factor 3 (eIF-3) complex. The eIF-3 complex interacts with pix.

It localises to the cytoplasm. Component of the eukaryotic translation initiation factor 3 (eIF-3) complex, which is involved in protein synthesis of a specialized repertoire of mRNAs and, together with other initiation factors, stimulates binding of mRNA and methionyl-tRNAi to the 40S ribosome. The eIF-3 complex specifically targets and initiates translation of a subset of mRNAs involved in cell proliferation. The chain is Eukaryotic translation initiation factor 3 subunit C from Drosophila willistoni (Fruit fly).